Consider the following 205-residue polypeptide: uncharacterized protein (205 aa).

A signal peptide spans 1 to 40; sequence MSAGKSYRKKMKQRRMNMKISKYALGILMLSLVFVLSACG. A disordered region spans residues 44-82; it reads STKESTHDNHSDSSTHEEMDHSGSADVPEGLQESKNPKY. Residues 47–66 show a composition bias toward basic and acidic residues; it reads ESTHDNHSDSSTHEEMDHSG.

This is an uncharacterized protein from Bacillus subtilis (strain 168).